The following is a 350-amino-acid chain: Protein-glutamate methylesterase/protein-glutamine glutaminase (350 aa).

A Response regulatory domain is found at 5-122 (RVLCVDDSAL…REGMLAYSEL (118 aa)). Asp-56 carries the 4-aspartylphosphate modification. A CheB-type methylesterase domain is found at 153 to 345 (LLSSEKLIAI…QRMLAQISAG (193 aa)). Active-site residues include Ser-165, His-191, and Asp-287.

It belongs to the CheB family. Phosphorylated by CheA. Phosphorylation of the N-terminal regulatory domain activates the methylesterase activity.

It is found in the cytoplasm. It catalyses the reaction [protein]-L-glutamate 5-O-methyl ester + H2O = L-glutamyl-[protein] + methanol + H(+). The catalysed reaction is L-glutaminyl-[protein] + H2O = L-glutamyl-[protein] + NH4(+). Functionally, involved in chemotaxis. Part of a chemotaxis signal transduction system that modulates chemotaxis in response to various stimuli. Catalyzes the demethylation of specific methylglutamate residues introduced into the chemoreceptors (methyl-accepting chemotaxis proteins or MCP) by CheR. Also mediates the irreversible deamidation of specific glutamine residues to glutamic acid. Does not interact with the C-terminal pentapeptide of the chemoreceptors. This is Protein-glutamate methylesterase/protein-glutamine glutaminase from Pectobacterium atrosepticum (strain SCRI 1043 / ATCC BAA-672) (Erwinia carotovora subsp. atroseptica).